We begin with the raw amino-acid sequence, 635 residues long: tRNA 5-methylaminomethyl-2-thiouridine biosynthesis bifunctional protein MnmC (635 aa).

The tract at residues 1-231 (MPITPASLSF…KRQMLRGRYL (231 aa)) is tRNA (mnm(5)s(2)U34)-methyltransferase. The tract at residues 249–635 (IGAGVAGTSI…RPARTLRGED (387 aa)) is FAD-dependent cmnm(5)s(2)U34 oxidoreductase.

It in the N-terminal section; belongs to the methyltransferase superfamily. tRNA (mnm(5)s(2)U34)-methyltransferase family. This sequence in the C-terminal section; belongs to the DAO family. FAD serves as cofactor.

It localises to the cytoplasm. The catalysed reaction is 5-aminomethyl-2-thiouridine(34) in tRNA + S-adenosyl-L-methionine = 5-methylaminomethyl-2-thiouridine(34) in tRNA + S-adenosyl-L-homocysteine + H(+). Catalyzes the last two steps in the biosynthesis of 5-methylaminomethyl-2-thiouridine (mnm(5)s(2)U) at the wobble position (U34) in tRNA. Catalyzes the FAD-dependent demodification of cmnm(5)s(2)U34 to nm(5)s(2)U34, followed by the transfer of a methyl group from S-adenosyl-L-methionine to nm(5)s(2)U34, to form mnm(5)s(2)U34. This Azoarcus sp. (strain BH72) protein is tRNA 5-methylaminomethyl-2-thiouridine biosynthesis bifunctional protein MnmC.